A 524-amino-acid polypeptide reads, in one-letter code: Sterol O-acyltransferase 2 (524 aa).

The interval 1–31 (MEPKAPQLRRRERQGEEQENGACGEGNTRTH) is disordered. Topologically, residues 1–118 (MEPKAPQLRR…LDELMGVQHF (118 aa)) are cytoplasmic. Residue His-117 coordinates cholesterol. The chain crosses the membrane as a helical span at residues 119 to 140 (RTIYHMFIAGLCVLIISTLAID). Residues 141–160 (FIDEGRLMLEFDLLLFSFGQ) lie on the Lumenal side of the membrane. The helical transmembrane segment at 161-186 (LPLALMMWVPMFLSTLLLPYQTLRLW) threads the bilayer. Residues 187-198 (ARPRSGGAWTLG) are Cytoplasmic-facing. The helical transmembrane segment at 199–222 (ASLGCVLLAAHAAVLCVLPVHVSV) threads the bilayer. Topologically, residues 223–230 (KHELPPAS) are lumenal. A helical transmembrane segment spans residues 231 to 254 (RCVLVFEQVRFLMKSYSFLRETVP). The Cytoplasmic portion of the chain corresponds to 255–295 (GIFCVRGGKGICTPSFSSYLYFLFCPTLIYRETYPRTPSIR). Cys-279 is subject to Cysteine sulfenic acid (-SOH); alternate. Residue Cys-279 forms a Glycyl cysteine thioester (Cys-Gly) (interchain with G-Cter in ubiquitin); alternate linkage. A helical transmembrane segment spans residues 296–328 (WNYVAKNFAQALGCLLYACFILGRLCVPVFANM). Over 329-345 (SREPFSTRALLLSILHA) the chain is Lumenal. Residues 346 to 371 (TGPGIFMLLLIFFAFLHCWLNAFAEM) form a helical membrane-spanning segment. Residues 372 to 419 (LRFGDRMFYRDWWNSTSFSNYYRTWNVVVHDWLYSYVYQDGLWLLGRQ) are Cytoplasmic-facing. An FYXDWWN motif motif is present at residues 379–385 (FYRDWWN). An acyl-CoA is bound by residues Asn-391, Arg-394, Asn-397, His-401, Tyr-409, and Ser-432. A helical transmembrane segment spans residues 420–444 (GRGAAMLGVFLVSALVHEYIFCFVL). His-436 is an active-site residue. Residues 445–450 (GFFYPV) are Lumenal-facing. A helical membrane pass occupies residues 451-466 (MLILFLVVGGLLNFTM). Topologically, residues 467–472 (NDRHTG) are cytoplasmic. The helical transmembrane segment at 473 to 504 (PAWNILMWTFLFLGQGIQVSLYCQEWYARRHC) threads the bilayer. Residues 505–524 (PLPQPTFWELVTPRSWSCHP) lie on the Lumenal side of the membrane.

The protein belongs to the membrane-bound acyltransferase family. Sterol o-acyltransferase subfamily. As to quaternary structure, may form homo- or heterodimers. Interacts with INSIG1; the interaction is direct and promotes association with AMFR/gp78. Post-translationally, polyubiquitinated by AMFR/gp78 at Cys-279, leading to its degradation when the lipid levels are low. Association with AMFR/gp78 is mediated via interaction with INSIG1. High concentration of cholesterol and fatty acid results in Cys-279 oxidation, preventing ubiquitination at the same site, resulting in protein stabilization. In terms of processing, oxidized at Cys-279: high concentration of cholesterol and fatty acid induce reactive oxygen species, which oxidizes Cys-279, preventing ubiquitination at the same site, and resulting in protein stabilization.

It localises to the endoplasmic reticulum membrane. The enzyme catalyses a sterol + a long-chain fatty acyl-CoA = a long-chain 3-hydroxysterol ester + CoA. The catalysed reaction is cholesterol + an acyl-CoA = a cholesterol ester + CoA. It catalyses the reaction cholesterol + (9Z)-octadecenoyl-CoA = cholesteryl (9Z-octadecenoate) + CoA. It carries out the reaction (5Z,8Z,11Z,14Z,17Z)-eicosapentaenoyl-CoA + cholesterol = (5Z,8Z,11Z,14Z,17Z-eicosapentaenoyl)-cholesterol + CoA. The enzyme catalyses (9Z,12Z,15Z)-octadecatrienoyl-CoA + cholesterol = (9Z,12Z,15Z-octadecatrienoyl)-cholesterol + CoA. The catalysed reaction is (5Z,8Z,11Z,14Z)-eicosatetraenoyl-CoA + cholesterol = cholesteryl (5Z,8Z,11Z,14Z)-eicosatetraenoate + CoA. Functionally, catalyzes the formation of fatty acid-cholesterol esters, which are less soluble in membranes than cholesterol. Plays a role in lipoprotein assembly and dietary cholesterol absorption. Utilizes oleoyl-CoA ((9Z)-octadecenoyl-CoA) and linolenoyl-CoA ((9Z,12Z,15Z)-octadecatrienoyl-CoA) as substrates. May provide cholesteryl esters for lipoprotein secretion from hepatocytes and intestinal mucosa. The protein is Sterol O-acyltransferase 2 of Rattus norvegicus (Rat).